Here is a 543-residue protein sequence, read N- to C-terminus: Cobyric acid synthase (543 aa).

Residues 260–483 enclose the GATase cobBQ-type domain; that stretch reads MLDIVLVDLP…LHGVFDADGF (224 aa). The active-site Nucleophile is Cys346. His475 is an active-site residue.

The protein belongs to the CobB/CobQ family. CobQ subfamily.

The protein operates within cofactor biosynthesis; adenosylcobalamin biosynthesis. Functionally, catalyzes amidations at positions B, D, E, and G on adenosylcobyrinic A,C-diamide. NH(2) groups are provided by glutamine, and one molecule of ATP is hydrogenolyzed for each amidation. The polypeptide is Cobyric acid synthase (Nitratidesulfovibrio vulgaris (strain ATCC 29579 / DSM 644 / CCUG 34227 / NCIMB 8303 / VKM B-1760 / Hildenborough) (Desulfovibrio vulgaris)).